Reading from the N-terminus, the 416-residue chain is Multifunctional CCA protein (416 aa).

ATP is bound by residues Gly-8 and Arg-11. Gly-8 and Arg-11 together coordinate CTP. Mg(2+) is bound by residues Asp-21 and Asp-23. ATP is bound by residues Arg-91, Arg-137, and Arg-140. CTP contacts are provided by Arg-91, Arg-137, and Arg-140. The region spanning 228 to 329 (TGLHTMMVLA…IKLFDKADFW (102 aa)) is the HD domain.

Belongs to the tRNA nucleotidyltransferase/poly(A) polymerase family. Bacterial CCA-adding enzyme type 1 subfamily. As to quaternary structure, monomer. Can also form homodimers and oligomers. The cofactor is Mg(2+). Ni(2+) is required as a cofactor.

It carries out the reaction a tRNA precursor + 2 CTP + ATP = a tRNA with a 3' CCA end + 3 diphosphate. It catalyses the reaction a tRNA with a 3' CCA end + 2 CTP + ATP = a tRNA with a 3' CCACCA end + 3 diphosphate. Its function is as follows. Catalyzes the addition and repair of the essential 3'-terminal CCA sequence in tRNAs without using a nucleic acid template. Adds these three nucleotides in the order of C, C, and A to the tRNA nucleotide-73, using CTP and ATP as substrates and producing inorganic pyrophosphate. tRNA 3'-terminal CCA addition is required both for tRNA processing and repair. Also involved in tRNA surveillance by mediating tandem CCA addition to generate a CCACCA at the 3' terminus of unstable tRNAs. While stable tRNAs receive only 3'-terminal CCA, unstable tRNAs are marked with CCACCA and rapidly degraded. This Shewanella sp. (strain MR-7) protein is Multifunctional CCA protein.